A 56-amino-acid polypeptide reads, in one-letter code: Large ribosomal subunit protein eL37 (56 aa).

Zn(2+)-binding residues include Cys19, Cys22, Cys34, and Cys37. The C4-type zinc-finger motif lies at 19–37 (CRRCGSVSLNIHTKQCTSC).

Belongs to the eukaryotic ribosomal protein eL37 family. It depends on Zn(2+) as a cofactor.

Functionally, binds to the 23S rRNA. This is Large ribosomal subunit protein eL37 from Methanococcoides burtonii (strain DSM 6242 / NBRC 107633 / OCM 468 / ACE-M).